A 333-amino-acid polypeptide reads, in one-letter code: 4-hydroxy-2-oxovalerate aldolase (333 aa).

The Pyruvate carboxyltransferase domain occupies 4 to 254 (VKIFDLTLRD…DCGIDLYKTM (251 aa)). 12–13 (RD) is a binding site for substrate. Aspartate 13 is a binding site for Mn(2+). Histidine 16 acts as the Proton acceptor in catalysis. Histidine 193 is a binding site for substrate. Histidine 193 and histidine 195 together coordinate Mn(2+). Substrate is bound at residue tyrosine 284.

It belongs to the 4-hydroxy-2-oxovalerate aldolase family.

It catalyses the reaction (S)-4-hydroxy-2-oxopentanoate = acetaldehyde + pyruvate. The sequence is that of 4-hydroxy-2-oxovalerate aldolase from Desulfitobacterium hafniense (strain DSM 10664 / DCB-2).